The sequence spans 631 residues: Forkhead box protein O1 (631 aa).

A compositionally biased stretch (pro residues) spans 1–11 (MAEAPQPPPPL). 4 disordered regions span residues 1 to 57 (MAEA…PAAG), 90 to 147 (DIRQ…SRRN), 223 to 324 (SSWW…MPEQ), and 372 to 404 (PNSS…PNSE). 2 stretches are compositionally biased toward low complexity: residues 37 to 48 (NPSSSANSSPAP) and 100 to 135 (QQQQ…PLGA). The segment at residues 149-243 (WGNLSYADLI…KNGKSPRRRA (95 aa)) is a DNA-binding region (fork-head). The segment covering 253-264 (AKSRGRAAKKKA) has biased composition (basic residues). The segment covering 265–282 (SMQSSQDGSSDSPGSQFS) has biased composition (low complexity). 2 stretches are compositionally biased toward polar residues: residues 303–315 (RPRT…TISG) and 381–403 (ASMM…SPNS).

Post-translationally, phosphorylated by AKT1; insulin-induced. IGF1 rapidly induces phosphorylation of Thr-28, Ser-245 and Ser-308. Phosphorylation of Ser-245 decreases DNA-binding activity and promotes the phosphorylation of Thr-28, and Ser-308, which leads to nuclear exclusion and loss of function. Phosphorylation of Ser-318 is independent of IGF1 and leads to reduced function. Localized to the animal hemisphere during early cleavage stages. At early tadpole stages, expressed in the branchial arches, pronephros and liver. Within the head, expressed in the forming thyroid gland and in head mesenchyme anterior to the eyes.

Its subcellular location is the cytoplasm. It localises to the nucleus. In terms of biological role, transcription factor that regulates metabolic homeostasis in response to oxidative stress. Binds to the consensus sequence 5'-TT[G/A]TTTTG-3' and the related Daf-16 family binding element (DBE) with consensus sequence 5'-TT[G/A]TTTAC-3'. Main regulator of redox balance and osteoblast numbers and controls bone mass. Orchestrates the endocrine function of the skeleton in regulating glucose metabolism. Also acts as a key regulator of chondrogenic commitment of skeletal progenitor cells in response to lipid availability: when lipids levels are low, translocates to the nucleus and promotes expression of sox9, which induces chondrogenic commitment and suppresses fatty acid oxidation. Acts synergistically with atf4 to suppress osteocalcin/bglap activity, increasing glucose levels and triggering glucose intolerance and insulin insensitivity. Also suppresses the transcriptional activity of runx2, an upstream activator of osteocalcin/bglap. May act as a positive regulator of apoptosis in cardiac smooth muscle cells as a result of its transcriptional activation of pro-apoptotic genes. This Xenopus laevis (African clawed frog) protein is Forkhead box protein O1.